Here is a 767-residue protein sequence, read N- to C-terminus: Photosystem I P700 chlorophyll a apoprotein A1 (767 aa).

Transmembrane regions (helical) follow at residues 72-95 (IFSAHFGHLAVIFIWLSGAFFHGA), 158-181 (LMALAIGALVMAGLMLNAGVFHYH), 197-221 (LNHHLAGLLGLGSLSWAGHLIHVSL), 305-323 (IAHHHVAIAVLFIVAGHMY), 364-387 (WHAQLAVNLAMLGSLSIIVAQHMY), 403-429 (IGLFTHHIWIGGFLIVGGAAHAAIAMV), 451-473 (AIISHLNWVCIWLGAHSFGLYIH), and 548-566 (FMVHHIHAFTIHVTVLILL). [4Fe-4S] cluster contacts are provided by Cys-590 and Cys-599. The next 2 membrane-spanning stretches (helical) occupy residues 606-627 (HVFLGLFWMYNSLSIVIFHFSW) and 681-703 (TSAYGIMFLGAHFIWAFSLMFLF). Residue His-692 coordinates chlorophyll a'. Met-700 and Tyr-708 together coordinate chlorophyll a. Trp-709 serves as a coordination point for phylloquinone. The helical transmembrane segment at 741–761 (AVGVAHYLLGGIATTWAFFHA) threads the bilayer.

Belongs to the PsaA/PsaB family. As to quaternary structure, the PsaA/B heterodimer binds the P700 chlorophyll special pair and subsequent electron acceptors. PSI consists of a core antenna complex that captures photons, and an electron transfer chain that converts photonic excitation into a charge separation. The cyanobacterial PSI reaction center is composed of one copy each of PsaA,B,C,D,E,F,I,J,K,L,M and X, and forms trimeric complexes. PSI electron transfer chain: 5 chlorophyll a, 1 chlorophyll a', 2 phylloquinones and 3 4Fe-4S clusters. PSI core antenna: 90 chlorophyll a, 22 carotenoids, 3 phospholipids and 1 galactolipid. P700 is a chlorophyll a/chlorophyll a' dimer, A0 is one or more chlorophyll a, A1 is one or both phylloquinones and FX is a shared 4Fe-4S iron-sulfur center. is required as a cofactor.

It localises to the cellular thylakoid membrane. The catalysed reaction is reduced [plastocyanin] + hnu + oxidized [2Fe-2S]-[ferredoxin] = oxidized [plastocyanin] + reduced [2Fe-2S]-[ferredoxin]. Functionally, psaA and PsaB bind P700, the primary electron donor of photosystem I (PSI), as well as the electron acceptors A0, A1 and FX. PSI is a plastocyanin/cytochrome c6-ferredoxin oxidoreductase, converting photonic excitation into a charge separation, which transfers an electron from the donor P700 chlorophyll pair to the spectroscopically characterized acceptors A0, A1, FX, FA and FB in turn. Oxidized P700 is reduced on the lumenal side of the thylakoid membrane by plastocyanin or cytochrome c6. The polypeptide is Photosystem I P700 chlorophyll a apoprotein A1 (Synechococcus sp. (strain CC9902)).